A 1682-amino-acid chain; its full sequence is 1-phosphatidylinositol 4,5-bisphosphate phosphodiesterase eta-1 (1682 aa).

The region spanning 20–128 is the PH domain; it reads SVMQSGTQMI…WITGLKYLMA (109 aa). EF-hand domains lie at 142–177, 178–214, and 226–246; these read THDQWVKQTFEEADKNGDGLLNIEEIHQLMHKLNVN, LPRRKVRQMFQEADTDENQGTLTFEEFCVFYKMMSLR, and DKKDHLTVEELAQFLKVEQKM. D155, N157, D159, and E166 together coordinate Ca(2+). In terms of domain architecture, PI-PLC X-box spans 299-444; the sequence is QDMDQPLCNY…LKGKILVKGK (146 aa). H314 is an active-site residue. Residues N315, E344, and D346 each contribute to the Ca(2+) site. H358 is an active-site residue. E393 provides a ligand contact to Ca(2+). Substrate is bound by residues K442 and K444. A disordered region spans residues 534-588; it reads LDVKESGKKSHGRSLMANFGKHKQKATKSRSKSYSTDDEDDSLQNPGKEGGQLYR. Residues 553–564 are compositionally biased toward basic residues; it reads GKHKQKATKSRS. One can recognise a PI-PLC Y-box domain in the interval 602–715; the sequence is LSDLVVYTNS…GYILKPQQMC (114 aa). Substrate is bound by residues S628 and R655. The C2 domain occupies 716 to 844; it reads KGTFNPFSGD…PGYRHVYLEG (129 aa). Residues I759, D761, D785, D814, H815, and D816 each coordinate Ca(2+). Over residues 992-1018 the composition is skewed to basic and acidic residues; the sequence is DTDGKENCLAGDKDDRRKGAATRKDPH. Disordered stretches follow at residues 992-1083, 1296-1321, and 1581-1603; these read DTDG…LSPR, NLPGFPDASPGQFPKSPTHGEDHSQV, and RAKEKQEAGKQKAMAQSTRGGVV. Residues 1019-1033 are compositionally biased toward low complexity; the sequence is FSNFNKKLSSSSSAL. Polar residues-rich tracts occupy residues 1040 to 1050 and 1065 to 1074; these read QGPTASVSNPE and NMTNDCQENH. The segment covering 1581 to 1590 has biased composition (basic and acidic residues); the sequence is RAKEKQEAGK.

Ca(2+) is required as a cofactor. As to expression, expressed in brain and to a lower extent in lung. In brain, it is found in cerebrum, cerebellum and spinal cord.

The protein localises to the cytoplasm. It is found in the membrane. The enzyme catalyses a 1,2-diacyl-sn-glycero-3-phospho-(1D-myo-inositol-4,5-bisphosphate) + H2O = 1D-myo-inositol 1,4,5-trisphosphate + a 1,2-diacyl-sn-glycerol + H(+). Its function is as follows. The production of the second messenger molecules diacylglycerol (DAG) and inositol 1,4,5-trisphosphate (IP3) is mediated by calcium-activated phosphatidylinositol-specific phospholipase C enzymes. This chain is 1-phosphatidylinositol 4,5-bisphosphate phosphodiesterase eta-1, found in Mus musculus (Mouse).